The chain runs to 120 residues: MAKKSLMAEPGDPIPRPRKKRYRPGTTALREIRKYQRSTDLLIQRLPFSRIVREISSEFVANFSTDVGLRWQSTALQCLQEAAEAFLVHLFEDTNLCAIHAKRVTIMQRDMQLARRIRGA.

Residues Met-1–Thr-26 are disordered. An H3-like region spans residues Ile-14–Ala-120.

Belongs to the histone H3 family. As to quaternary structure, component of centromeric nucleosomes, where DNA is wrapped around a histone octamer core. The octamer contains two molecules each of H2A, H2B, cnp1/CENPA and H4 assembled in one cnp1-H4 heterotetramer and two H2A-H2B heterodimers. Interacts with the inner kinetochore. Component of centromeric nucleosomes. Interacts with mis6. Interacts with sim4. Ubiquitinated. Is degraded through ubiquitin-mediated proteolysis when not protected by its association to the kinetochore.

The protein resides in the nucleus. It is found in the chromosome. The protein localises to the centromere. Histone H3-like nucleosomal protein that is specifically found in centromeric nucleosomes. Replaces conventional H3 in the nucleosome core of centromeric chromatin that serves as an assembly site for the inner kinetochore. Required for recruitment and assembly of kinetochore proteins, mitotic progression and chromosome segregation. May serve as an epigenetic mark that propagates centromere identity through replication and cell division. This Schizosaccharomyces pombe (strain 972 / ATCC 24843) (Fission yeast) protein is Histone H3-like centromeric protein cnp1 (cnp1).